The chain runs to 130 residues: Probable pilin MJ0835.1 (130 aa).

Residues 1–14 (MNTMENKIIKSKKA) constitute a propeptide that is removed on maturation. The QXSXEXXXL motif lies at 15–23 (QVSLEFSFL).

In terms of processing, the N-terminus is cleaved by the prepilin peptidase EppA, which recognizes the class III signal sequence.

Its subcellular location is the secreted. The protein localises to the cell surface. It is found in the fimbrium. The polypeptide is Probable pilin MJ0835.1 (Methanocaldococcus jannaschii (strain ATCC 43067 / DSM 2661 / JAL-1 / JCM 10045 / NBRC 100440) (Methanococcus jannaschii)).